Here is a 71-residue protein sequence, read N- to C-terminus: Small ribosomal subunit protein bS21 (71 aa).

This sequence belongs to the bacterial ribosomal protein bS21 family.

The sequence is that of Small ribosomal subunit protein bS21 from Marinobacter nauticus (strain ATCC 700491 / DSM 11845 / VT8) (Marinobacter aquaeolei).